The primary structure comprises 617 residues: Serine/threonine-protein kinase par-4 (617 aa).

Polar residues predominate over residues M1–Q11. The tract at residues M1 to D59 is disordered. A compositionally biased stretch (acidic residues) spans P46–F57. Residues Y183–F446 enclose the Protein kinase domain. Residues I189–V197 and K212 contribute to the ATP site. Catalysis depends on D310, which acts as the Proton acceptor. The interval L523–A617 is disordered. The span at D587 to P597 shows a compositional bias: pro residues.

Belongs to the protein kinase superfamily. CAMK Ser/Thr protein kinase family. LKB1 subfamily. As to quaternary structure, interacts with strd-1. Requires Mg(2+) as cofactor. Mn(2+) serves as cofactor. Expressed in the gonads, oocytes and early embryos (at protein level).

It is found in the cytoplasm. Its subcellular location is the cell cortex. It catalyses the reaction L-seryl-[protein] + ATP = O-phospho-L-seryl-[protein] + ADP + H(+). The enzyme catalyses L-threonyl-[protein] + ATP = O-phospho-L-threonyl-[protein] + ADP + H(+). Functionally, required for cytoplasmic partitioning and asymmetric cell division in early embryogenesis. Controls the asymmetric cell division of the Q.p neuroblast lineage. Involved in mediating cell polarization via regulation of anillin family scaffold proteins. Phosphorylates and restricts the asymmetry effectors mex-5 and mex-6 to the anterior cytoplasm of the zygote and maintains these phosphorylations until fertilization. May phosphorylate par-1. Required for strd-1 localization to the cell cortex of early embryos and may be required for strd-1 protein stabilization. May regulate the integrity of the early embryonic cortex in a strd-1-dependent manner. Phosphorylates and regulates aak-2 in response to oxidative stress and during dauer development. May also play a role in motility, behavioral response, regulation of lifespan and dauer formation through this pathway. Required to establish germline stem cell (GSC) quiescence during dauer development. Acts downstream of unc-40 in dendrite outgrowth. May play a role in cell shedding during embryogenesis, probably by phosphorylating pig-1. The protein is Serine/threonine-protein kinase par-4 (par-4) of Caenorhabditis elegans.